Consider the following 314-residue polypeptide: GMP synthase [glutamine-hydrolyzing] subunit B (314 aa).

The GMPS ATP-PPase domain maps to 2–186; the sequence is FDPKKFVEEA…LGIPDEIVER (185 aa). 29-35 is a binding site for ATP; it reads SGGVDST.

As to quaternary structure, heterodimer composed of a glutamine amidotransferase subunit (A) and a GMP-binding subunit (B).

The catalysed reaction is XMP + L-glutamine + ATP + H2O = GMP + L-glutamate + AMP + diphosphate + 2 H(+). It participates in purine metabolism; GMP biosynthesis; GMP from XMP (L-Gln route): step 1/1. Catalyzes the synthesis of GMP from XMP. In Methanopyrus kandleri (strain AV19 / DSM 6324 / JCM 9639 / NBRC 100938), this protein is GMP synthase [glutamine-hydrolyzing] subunit B (guaAB).